The sequence spans 476 residues: Lactate utilization protein B (476 aa).

4Fe-4S ferredoxin-type domains lie at 304 to 334 (GTEF…GHSY) and 353 to 382 (YDEY…LHEL). Positions 313, 316, 319, 323, 366, 369, and 373 each coordinate [4Fe-4S] cluster.

Belongs to the LutB/YkgF family.

In terms of biological role, is involved in L-lactate degradation and allows cells to grow with lactate as the sole carbon source. Has probably a role as an electron transporter during oxidation of L-lactate. This is Lactate utilization protein B from Bacillus velezensis (strain DSM 23117 / BGSC 10A6 / LMG 26770 / FZB42) (Bacillus amyloliquefaciens subsp. plantarum).